The sequence spans 481 residues: Aspartyl/glutamyl-tRNA(Asn/Gln) amidotransferase subunit B (481 aa).

Belongs to the GatB/GatE family. GatB subfamily. Heterotrimer of A, B and C subunits.

The enzyme catalyses L-glutamyl-tRNA(Gln) + L-glutamine + ATP + H2O = L-glutaminyl-tRNA(Gln) + L-glutamate + ADP + phosphate + H(+). It catalyses the reaction L-aspartyl-tRNA(Asn) + L-glutamine + ATP + H2O = L-asparaginyl-tRNA(Asn) + L-glutamate + ADP + phosphate + 2 H(+). Functionally, allows the formation of correctly charged Asn-tRNA(Asn) or Gln-tRNA(Gln) through the transamidation of misacylated Asp-tRNA(Asn) or Glu-tRNA(Gln) in organisms which lack either or both of asparaginyl-tRNA or glutaminyl-tRNA synthetases. The reaction takes place in the presence of glutamine and ATP through an activated phospho-Asp-tRNA(Asn) or phospho-Glu-tRNA(Gln). This is Aspartyl/glutamyl-tRNA(Asn/Gln) amidotransferase subunit B from Teredinibacter turnerae (strain ATCC 39867 / T7901).